A 664-amino-acid chain; its full sequence is Methionine--tRNA ligase (664 aa).

A 'HIGH' region motif is present at residues 15 to 25 (YYPSGKAHIGH). The 'KMSKS' region signature appears at 310 to 314 (KMSKS). Residue lysine 313 coordinates ATP. Residues 563–664 (DFDKIDLRVA…SALPNGAKVK (102 aa)) form the tRNA-binding domain.

The protein belongs to the class-I aminoacyl-tRNA synthetase family. MetG type 2B subfamily. In terms of assembly, homodimer.

It localises to the cytoplasm. The catalysed reaction is tRNA(Met) + L-methionine + ATP = L-methionyl-tRNA(Met) + AMP + diphosphate. In terms of biological role, is required not only for elongation of protein synthesis but also for the initiation of all mRNA translation through initiator tRNA(fMet) aminoacylation. The chain is Methionine--tRNA ligase (metG) from Listeria monocytogenes serovar 1/2a (strain ATCC BAA-679 / EGD-e).